The chain runs to 379 residues: Alanine racemase (379 aa).

Lysine 37 functions as the Proton acceptor; specific for D-alanine in the catalytic mechanism. N6-(pyridoxal phosphate)lysine is present on lysine 37. Residue arginine 137 coordinates substrate. Residue tyrosine 269 is the Proton acceptor; specific for L-alanine of the active site. Residue methionine 317 coordinates substrate.

The protein belongs to the alanine racemase family. Pyridoxal 5'-phosphate is required as a cofactor.

The catalysed reaction is L-alanine = D-alanine. The protein operates within amino-acid biosynthesis; D-alanine biosynthesis; D-alanine from L-alanine: step 1/1. Its function is as follows. Catalyzes the interconversion of L-alanine and D-alanine. May also act on other amino acids. In Geobacter sp. (strain M21), this protein is Alanine racemase (alr).